The following is a 441-amino-acid chain: tRNA(Ile)-lysidine synthase (441 aa).

28 to 33 (SGGTDS) contributes to the ATP binding site.

It belongs to the tRNA(Ile)-lysidine synthase family.

The protein localises to the cytoplasm. The enzyme catalyses cytidine(34) in tRNA(Ile2) + L-lysine + ATP = lysidine(34) in tRNA(Ile2) + AMP + diphosphate + H(+). Ligates lysine onto the cytidine present at position 34 of the AUA codon-specific tRNA(Ile) that contains the anticodon CAU, in an ATP-dependent manner. Cytidine is converted to lysidine, thus changing the amino acid specificity of the tRNA from methionine to isoleucine. In Orientia tsutsugamushi (strain Boryong) (Rickettsia tsutsugamushi), this protein is tRNA(Ile)-lysidine synthase.